The chain runs to 405 residues: Acetylornithine aminotransferase (405 aa).

Pyridoxal 5'-phosphate contacts are provided by residues 107 to 108 (GA) and F140. N(2)-acetyl-L-ornithine is bound at residue R143. 225–228 (DEVQ) contributes to the pyridoxal 5'-phosphate binding site. K254 is subject to N6-(pyridoxal phosphate)lysine. S282 lines the N(2)-acetyl-L-ornithine pocket. Residue T283 coordinates pyridoxal 5'-phosphate.

This sequence belongs to the class-III pyridoxal-phosphate-dependent aminotransferase family. ArgD subfamily. As to quaternary structure, homodimer. Pyridoxal 5'-phosphate serves as cofactor.

It localises to the cytoplasm. It carries out the reaction N(2)-acetyl-L-ornithine + 2-oxoglutarate = N-acetyl-L-glutamate 5-semialdehyde + L-glutamate. Its pathway is amino-acid biosynthesis; L-arginine biosynthesis; N(2)-acetyl-L-ornithine from L-glutamate: step 4/4. This Shewanella oneidensis (strain ATCC 700550 / JCM 31522 / CIP 106686 / LMG 19005 / NCIMB 14063 / MR-1) protein is Acetylornithine aminotransferase.